Consider the following 197-residue polypeptide: MLSHLRPALVSMGLFTVLLGLAYPLAVTGVAQAAFPNQANGSLIRDADGKVVGSALIGQVFAKPEYFHGRPSAAGAGYDASASSGSNMGPLNETLIARLKTDAAALRAENPGVAIPADAVTTSGSGLDPDISPANARFQAPRVAGARGVPEKDVTALIDAQVQQPLLGFIGQPRVNVLALNRALDARYPPLASQKDG.

A helical transmembrane segment spans residues 7 to 27 (PALVSMGLFTVLLGLAYPLAV).

Belongs to the KdpC family. In terms of assembly, the system is composed of three essential subunits: KdpA, KdpB and KdpC.

Its subcellular location is the cell inner membrane. Its function is as follows. Part of the high-affinity ATP-driven potassium transport (or Kdp) system, which catalyzes the hydrolysis of ATP coupled with the electrogenic transport of potassium into the cytoplasm. This subunit acts as a catalytic chaperone that increases the ATP-binding affinity of the ATP-hydrolyzing subunit KdpB by the formation of a transient KdpB/KdpC/ATP ternary complex. This is Potassium-transporting ATPase KdpC subunit from Caulobacter vibrioides (strain ATCC 19089 / CIP 103742 / CB 15) (Caulobacter crescentus).